The sequence spans 1132 residues: DNA topoisomerase 2 (1132 aa).

ATP-binding positions include Asn-68, Asn-100, 137–139, and 150–157; these read SSN and GKNGLGVK. Residues 327-329 form an interaction with DNA region; that stretch reads NKP. Residue 363–365 coordinates ATP; it reads QNK. Residues 442–577 form the Toprim domain; sequence CTLIVCEGLS…NLKDFPFISS (136 aa). Glu-448, Asp-538, and Asp-540 together coordinate Mg(2+). The region spanning 713 to 1125 is the Topo IIA-type catalytic domain; the sequence is LPHLIDGLKE…NEGQMWLKDI (413 aa). Catalysis depends on Tyr-803, which acts as the O-(5'-phospho-DNA)-tyrosine intermediate. The segment at 979–988 is interaction with DNA; sequence KLRSYIHTSN.

It belongs to the type II topoisomerase family. It depends on Mg(2+) as a cofactor. Mn(2+) serves as cofactor. Ca(2+) is required as a cofactor.

It carries out the reaction ATP-dependent breakage, passage and rejoining of double-stranded DNA.. In terms of biological role, can introduce negative superhelical turns into double-stranded circular DNA. In Acheta domesticus (House cricket), this protein is DNA topoisomerase 2 (TOP2).